The primary structure comprises 665 residues: Protein-arginine deiminase type-2 (665 aa).

Residues D123, D125, D127, E131, N154, D156, D158, D166, D169, K171, D177, D180, E354, D389, F408, L411, and E412 each coordinate Ca(2+). The active-site Nucleophile is C647.

The protein belongs to the protein arginine deiminase family. Homodimer. Requires Ca(2+) as cofactor. In terms of tissue distribution, spinal cord, submaxillary gland, cerebrum, cerebellum, and skeletal muscle.

It is found in the cytoplasm. It catalyses the reaction L-arginyl-[protein] + H2O = L-citrullyl-[protein] + NH4(+). Its function is as follows. Catalyzes the deimination of arginine residues of proteins. This chain is Protein-arginine deiminase type-2 (Padi2), found in Rattus norvegicus (Rat).